The sequence spans 201 residues: Molybdenum cofactor guanylyltransferase (201 aa).

Residues 14–16 (LAG), K31, and D104 contribute to the GTP site. Residue D104 participates in Mg(2+) binding.

This sequence belongs to the MobA family. In terms of assembly, monomer. Mg(2+) serves as cofactor.

It is found in the cytoplasm. The catalysed reaction is Mo-molybdopterin + GTP + H(+) = Mo-molybdopterin guanine dinucleotide + diphosphate. Transfers a GMP moiety from GTP to Mo-molybdopterin (Mo-MPT) cofactor (Moco or molybdenum cofactor) to form Mo-molybdopterin guanine dinucleotide (Mo-MGD) cofactor. The sequence is that of Molybdenum cofactor guanylyltransferase from Helicobacter pylori (strain G27).